The primary structure comprises 2507 residues: Highly reducing polyketide synthase lcsB (2507 aa).

A Ketosynthase family 3 (KS3) domain is found at alanine 2 to serine 393. Residues asparagine 399 to glutamate 501 are disordered. 2 stretches are compositionally biased toward polar residues: residues serine 405–proline 414 and asparagine 470–threonine 488. Residues tryptophan 581–lysine 900 form a malonyl-CoA:ACP transacylase (MAT) domain region. Positions histidine 953–alanine 1080 are N-terminal hotdog fold. The segment at histidine 953–aspartate 1232 is dehydratase (DH) domain. The 282-residue stretch at histidine 953–glutamate 1234 folds into the PKS/mFAS DH domain. Histidine 984 acts as the Proton acceptor; for dehydratase activity in catalysis. A C-terminal hotdog fold region spans residues alanine 1092–glutamate 1234. Aspartate 1151 acts as the Proton donor; for dehydratase activity in catalysis. The methyltransferase (CMet) domain stretch occupies residues leucine 1402–proline 1570. Positions glycine 1793–valine 2105 are enoyl reductase (ER) (ER) domain. The tract at residues serine 2130–glycine 2303 is ketoreductase (KR) domain. The region spanning glutamate 2425–leucine 2503 is the Carrier domain. Position 2463 is an O-(pantetheine 4'-phosphoryl)serine (serine 2463).

Its pathway is secondary metabolite biosynthesis. Functionally, highly reducing polyketide synthase; part of the gene cluster that mediates the biosynthesis of the lipopeptide antibiotics leucinostatins that show extensive biological activities, including antimalarial, antiviral, antibacterial, antifungal, and antitumor activities, as well as phytotoxic. Leucinostatin A contains nine amino acid residues, including the unusual amino acid 4-methyl-L-proline (MePro), 2-amino-6-hydroxy-4-methyl-8-oxodecanoic acid (AHyMeOA), 3-hydroxyleucine (HyLeu), alpha-aminoisobutyric acid (AIB), beta-Ala, a 4-methylhex-2-enoic acid at the N-terminus as well as a N1,N1-dimethylpropane-1,2-diamine (DPD) at the C-terminus. The biosynthesis of leucinostatins is probably initiated with the assembly of 4-methylhex-2-enoic acid by a reducing PKS. Two reducing polyketide synthases, lcsB and lcsC, have been identified in the cluster and it is not clear which is the one that assembles 4-methylhex-2-enoic acid since both contain KS, AT, DH, cMT, ER, KR and ACP domains. The polyketide residue might be transferred to the NRPS lcsA, mediated by two additional enzymes, the acyl-CoA ligase lcsD and the thioesterase lcsE. The linear polyketide carboxylic acid, which is released from PKS, is converted to a CoA thioester by lcsD, and then lcsE hydrolyzes the thiol bond and shuttles the polyketide intermediate to lcsA. The C domain of the first module catalyzed the condensation of 4-methylhex-2-enoic acid and MePro carried by domain A1, followed by successive condensations of nine amino acids to trigger the elongation of the linear peptide. A5 and A6 domains of lcsA are proposed to incorporate leucine, A2 AHyMeOA, and A3 incorporates HyLeu. A4, A7 and A8 incorporate AIB. The AHyMeOA in leucinostatin A activated by the A2 might be produced by the second PKS (lcsB or lcsC) present within the cluster. The MePro is probably produced via leucine cyclization and may originate from a separate pathway, independent of the cluster. Another nonproteinogenic amino acid, beta-Ala, could be produced by an aspartic acid decarboxylase also localized outside of the cluster. Two candidates are VFPBJ_01400 and VFPBJ_10476. The final peptide scaffold may be released by the NAD(P)H-dependent thioester reductase (TE) at the C-terminal region of lcsA. Transamination of the lcsA product by the transaminase lcsP may produce DPD at the C-terminus. Further hydroxylation steps performed alternatively by the cytochrome P450 monooxygenases lcsI, lcsK andr lcsN then yield the non-methylated leucinostatins precursor. It is also possible that leucines can be hydroxylated prior to their incorporation into the peptide. Varying extents of methylation then lead to the formation of leucinostatins A and B. The sequence is that of Highly reducing polyketide synthase lcsB from Purpureocillium lilacinum (Paecilomyces lilacinus).